An 89-amino-acid polypeptide reads, in one-letter code: MSLDTTEKQELINAHQTHATDTGSAEVQVAMLTERISKLSSHLQQNIHDFSSRQGLLKMIGRRKRLLGYVRGKSEKRYSDLIAKLGIRG.

Basic and acidic residues predominate over residues M1–E10. The tract at residues M1 to G23 is disordered. Residues A14–G23 are compositionally biased toward polar residues.

Belongs to the universal ribosomal protein uS15 family. As to quaternary structure, part of the 30S ribosomal subunit. Forms a bridge to the 50S subunit in the 70S ribosome, contacting the 23S rRNA.

Functionally, one of the primary rRNA binding proteins, it binds directly to 16S rRNA where it helps nucleate assembly of the platform of the 30S subunit by binding and bridging several RNA helices of the 16S rRNA. Its function is as follows. Forms an intersubunit bridge (bridge B4) with the 23S rRNA of the 50S subunit in the ribosome. The polypeptide is Small ribosomal subunit protein uS15 (Synechococcus sp. (strain WH7803)).